We begin with the raw amino-acid sequence, 346 residues long: Phosphoribosylformylglycinamidine cyclo-ligase (346 aa).

It belongs to the AIR synthase family.

Its subcellular location is the cytoplasm. The enzyme catalyses 2-formamido-N(1)-(5-O-phospho-beta-D-ribosyl)acetamidine + ATP = 5-amino-1-(5-phospho-beta-D-ribosyl)imidazole + ADP + phosphate + H(+). Its pathway is purine metabolism; IMP biosynthesis via de novo pathway; 5-amino-1-(5-phospho-D-ribosyl)imidazole from N(2)-formyl-N(1)-(5-phospho-D-ribosyl)glycinamide: step 2/2. This Bacillus thuringiensis subsp. konkukian (strain 97-27) protein is Phosphoribosylformylglycinamidine cyclo-ligase.